Here is a 349-residue protein sequence, read N- to C-terminus: DNA polymerase IV (349 aa).

Residues 7-188 (IIHIDMDYFF…LPVKKLFGVG (182 aa)) enclose the UmuC domain. Mg(2+) contacts are provided by Asp-11 and Asp-106. The active site involves Glu-107.

This sequence belongs to the DNA polymerase type-Y family. As to quaternary structure, monomer. Mg(2+) serves as cofactor.

The protein resides in the cytoplasm. It catalyses the reaction DNA(n) + a 2'-deoxyribonucleoside 5'-triphosphate = DNA(n+1) + diphosphate. Functionally, poorly processive, error-prone DNA polymerase involved in untargeted mutagenesis. Copies undamaged DNA at stalled replication forks, which arise in vivo from mismatched or misaligned primer ends. These misaligned primers can be extended by PolIV. Exhibits no 3'-5' exonuclease (proofreading) activity. May be involved in translesional synthesis, in conjunction with the beta clamp from PolIII. The sequence is that of DNA polymerase IV from Francisella tularensis subsp. holarctica (strain OSU18).